Consider the following 221-residue polypeptide: Chalcone--flavanone isomerase 2 (221 aa).

Threonine 50, asparagine 115, and serine 192 together coordinate substrate.

It belongs to the chalcone isomerase family.

It carries out the reaction a chalcone = a flavanone.. Its pathway is secondary metabolite biosynthesis; flavonoid biosynthesis. Its function is as follows. Catalyzes the intramolecular cyclization of bicyclic chalcones into tricyclic (S)-flavanones. Responsible for the isomerization of 4,2',4',6'-tetrahydroxychalcone (also termed chalcone) into naringenin. The sequence is that of Chalcone--flavanone isomerase 2 (CHI2) from Lotus japonicus (Lotus corniculatus var. japonicus).